A 327-amino-acid polypeptide reads, in one-letter code: Phenylalanine--tRNA ligase alpha subunit (327 aa).

Glutamate 252 lines the Mg(2+) pocket.

This sequence belongs to the class-II aminoacyl-tRNA synthetase family. Phe-tRNA synthetase alpha subunit type 1 subfamily. Tetramer of two alpha and two beta subunits. Requires Mg(2+) as cofactor.

It localises to the cytoplasm. The catalysed reaction is tRNA(Phe) + L-phenylalanine + ATP = L-phenylalanyl-tRNA(Phe) + AMP + diphosphate + H(+). The protein is Phenylalanine--tRNA ligase alpha subunit of Salmonella newport (strain SL254).